The following is a 390-amino-acid chain: S-adenosylmethionine synthase 1 (390 aa).

Glutamate 9 is a binding site for Mg(2+). Histidine 15 serves as a coordination point for ATP. Position 43 (glutamate 43) interacts with K(+). L-methionine-binding residues include glutamate 56 and glutamine 99. ATP contacts are provided by residues aspartate 167–lysine 169, serine 235–phenylalanine 238, aspartate 246, arginine 252–lysine 253, alanine 269, lysine 273, and lysine 277. Aspartate 246 lines the L-methionine pocket. Residue lysine 277 coordinates L-methionine.

This sequence belongs to the AdoMet synthase family. In terms of assembly, homotetramer. The cofactor is Mn(2+). It depends on Mg(2+) as a cofactor. Co(2+) serves as cofactor. Requires K(+) as cofactor.

The protein localises to the cytoplasm. It catalyses the reaction L-methionine + ATP + H2O = S-adenosyl-L-methionine + phosphate + diphosphate. It functions in the pathway amino-acid biosynthesis; S-adenosyl-L-methionine biosynthesis; S-adenosyl-L-methionine from L-methionine: step 1/1. Functionally, catalyzes the formation of S-adenosylmethionine from methionine and ATP. The reaction comprises two steps that are both catalyzed by the same enzyme: formation of S-adenosylmethionine (AdoMet) and triphosphate, and subsequent hydrolysis of the triphosphate. This chain is S-adenosylmethionine synthase 1 (SAM1), found in Actinidia chinensis var. chinensis (Chinese soft-hair kiwi).